Here is a 470-residue protein sequence, read N- to C-terminus: Acetyl-CoA decarbonylase/synthase complex subunit gamma (470 aa).

In terms of domain architecture, 4Fe-4S spans 1-62 (MKVKSPLEVY…DPKVKKKLEE (62 aa)). The [4Fe-4S] cluster site is built by Cys18, Cys21, Cys26, and Cys43.

As to quaternary structure, heterodimer of delta and gamma chains. The ACDS complex is made up of alpha, epsilon, beta, gamma and delta chains with a probable stoichiometry of (alpha(2)epsilon(2))(4)-beta(8)-(gamma(1)delta(1))(8). Corrinoid is required as a cofactor. Requires [4Fe-4S] cluster as cofactor.

It carries out the reaction 5,6,7,8-tetrahydrosarcinapterin + methyl-Co(III)-[corrinoid Fe-S protein] = 5-methyltetrahydrosarcinapterin + Co(I)-[corrinoid Fe-S protein] + H(+). Its function is as follows. Part of a complex that catalyzes the reversible cleavage of acetyl-CoA, allowing autotrophic growth from CO(2). This chain is Acetyl-CoA decarbonylase/synthase complex subunit gamma, found in Archaeoglobus fulgidus (strain ATCC 49558 / DSM 4304 / JCM 9628 / NBRC 100126 / VC-16).